A 477-amino-acid polypeptide reads, in one-letter code: MAGKTLYDKLWEAHEVKRRDDGSSLIYIDRHIIHEVTSPQAFEGLRLANRKPWRIDTNIATPDHNVPTTPERKGGIEAIVDQVSRLQVQTLDENCDEYGIVEFKMNDERQGIVHVISPEQGATLPGMTVVCGDSHTSTHGAFGALAHGIGTSEVEHVLATQCLVAKKMKNMLVRVEGQLPAGVTAKDIVLAVIGKIGTAGGNGHAMEFAGSAIRELSMEGRMTICNMSIEAGARVGLVATDATTVAYVEGRPYAPKGEQWKQAVESWKDLVSDEDAVFDTVVELDASQIKPQVSWGTSPEMVLAVDQRVPDPAAEADLVKRGSIERALKYMGLTANQAITDIKLDRVFIGSCTNSRIEDLRAAAEIAKGRKVAASVKQAIVVPGSGLVKAQAEREGLDKIFLEAGFEWREPGCSMCLAMNPDRLESGEHCASTSNRNFEGRQGAGGRTHLVSPAMAAAAAVAGHFIDVRELIQGSAA.

Residues Cys-352, Cys-413, and Cys-416 each contribute to the [4Fe-4S] cluster site.

It belongs to the aconitase/IPM isomerase family. LeuC type 1 subfamily. As to quaternary structure, heterodimer of LeuC and LeuD. [4Fe-4S] cluster is required as a cofactor.

It carries out the reaction (2R,3S)-3-isopropylmalate = (2S)-2-isopropylmalate. The protein operates within amino-acid biosynthesis; L-leucine biosynthesis; L-leucine from 3-methyl-2-oxobutanoate: step 2/4. In terms of biological role, catalyzes the isomerization between 2-isopropylmalate and 3-isopropylmalate, via the formation of 2-isopropylmaleate. The protein is 3-isopropylmalate dehydratase large subunit of Pseudomonas putida (strain GB-1).